Reading from the N-terminus, the 501-residue chain is Protein YLS7 (501 aa).

A helical; Signal-anchor for type II membrane protein transmembrane segment spans residues 25-45 (IAFAIGGLTSFVIFASLLLFT). The tract at residues 69–131 (HSIHDPDRNP…NVSIDEEATQ (63 aa)) is disordered. Positions 78–89 (PSPVSSSESPPV) are enriched in low complexity. Residues 94–113 (SDDKVLPKGSHDSNDVRLGE) show a composition bias toward basic and acidic residues. Over residues 114–124 (ETNSGKSSNVS) the composition is skewed to polar residues. The GDS motif signature appears at 211–213 (GDS). The segment at 438–467 (RHDGHPGPYRSPDPKKITKRGPDGQPPPQD) is disordered. Basic and acidic residues predominate over residues 449-459 (PDPKKITKRGP). The DCXHWCLPGXXDXWN motif motif lies at 467-481 (DCLHWCMPGPVDTWN).

The protein belongs to the PC-esterase family. TBL subfamily. Expressed in roots, cauline leaves and flowers.

The protein resides in the membrane. Its function is as follows. May act as a bridging protein that binds pectin and other cell wall polysaccharides. Probably involved in maintaining esterification of pectins. May be involved in the specific O-acetylation of cell wall polymers. This Arabidopsis thaliana (Mouse-ear cress) protein is Protein YLS7 (YLS7).